Consider the following 366-residue polypeptide: Homer protein homolog 1 (366 aa).

The region spanning 1 to 110 (MGEQPIFSTR…EKFQEFKEAA (110 aa)) is the WH1 domain. An N-acetylglycine modification is found at glycine 2. The tract at residues 114-189 (KEKSQEKMEL…RTQGLSHASS (76 aa)) is disordered. Positions 138-147 (SPLTPESING) are enriched in polar residues. Positions 193–364 (KHWEAELATL…LRDNLAKLLE (172 aa)) form a coiled coil. The tract at residues 302–366 (KLQEVEIRNK…DNLAKLLECS (65 aa)) is required for tetramerization. Serine 318 is subject to Phosphoserine.

This sequence belongs to the Homer family. In terms of assembly, tetramer; this tetrameric structure is critical for forming the high-order complex with SHANK1, which in turn is necessary for the structural and functional integrity of dendritic spines. Interacts with GRM1, GRM5, ITPR1, DYN3, RYR1, RYR2 and SHANK3. Interacts with IFT57 and OPHN1. Isoform 1 and isoform 2 encode coiled-coil structures that mediate homo- and heteromultimerization. Interacts with SHANK1; forms high-order polymerized complex with a mesh-like network structure, at least composed of SHANK1, HOMER1 and DLGAP1; the complex formation is SHANK1 multimerization dependent. Interacts with NFATC4. Interacts with DAGLA (via PPXXF motif); this interaction is required for the cell membrane localization of DAGLA. Interacts with SRGAP2. In terms of tissue distribution, highly expressed in cortex, Purkinje cells of the cerebellum, hippocampus, striatum and olfactory bulb. Isoform 1 and isoform 3 are expressed in skeletal and cardiac muscle.

The protein localises to the cytoplasm. It localises to the postsynaptic density. Its subcellular location is the synapse. It is found in the cell projection. The protein resides in the dendritic spine. In terms of biological role, postsynaptic density scaffolding protein. Binds and cross-links cytoplasmic regions of GRM1, GRM5, ITPR1, DNM3, RYR1, RYR2, SHANK1 and SHANK3. By physically linking GRM1 and GRM5 with ER-associated ITPR1 receptors, it aids the coupling of surface receptors to intracellular calcium release. May also couple GRM1 to PI3 kinase through its interaction with AGAP2. Differentially regulates the functions of the calcium activated channel ryanodine receptors RYR1 and RYR2. Isoform 1 decreases the activity of RYR2, and increases the activity of RYR1, whereas isoform 3 counteracts the effects by competing for binding sites. Isoform 1 regulates the trafficking and surface expression of GRM5. Isoform 3 acts as a natural dominant negative, in dynamic competition with constitutively expressed isoform 1, and isoform 2 to regulate synaptic metabotropic glutamate function. Isoform 3, may be involved in the structural changes that occur at synapses during long-lasting neuronal plasticity and development. Forms a high-order complex with SHANK1, which in turn is necessary for the structural and functional integrity of dendritic spines. Negatively regulates T cell activation by inhibiting the calcineurin-NFAT pathway. Acts by competing with calcineurin/PPP3CA for NFAT protein binding, hence preventing NFAT activation by PPP3CA. The sequence is that of Homer protein homolog 1 from Rattus norvegicus (Rat).